Here is a 210-residue protein sequence, read N- to C-terminus: Proteasome subunit beta (210 aa).

A propeptide spans 1–9 (MDNDKHLKG) (removed in mature form; by autocatalysis). The active-site Nucleophile is Thr10.

This sequence belongs to the peptidase T1B family. In terms of assembly, the 20S proteasome core is composed of 14 alpha and 14 beta subunits that assemble into four stacked heptameric rings, resulting in a barrel-shaped structure. The two inner rings, each composed of seven catalytic beta subunits, are sandwiched by two outer rings, each composed of seven alpha subunits. The catalytic chamber with the active sites is on the inside of the barrel. Has a gated structure, the ends of the cylinder being occluded by the N-termini of the alpha-subunits. Is capped at one or both ends by the proteasome regulatory ATPase, PAN.

Its subcellular location is the cytoplasm. The enzyme catalyses Cleavage of peptide bonds with very broad specificity.. With respect to regulation, the formation of the proteasomal ATPase PAN-20S proteasome complex, via the docking of the C-termini of PAN into the intersubunit pockets in the alpha-rings, triggers opening of the gate for substrate entry. Interconversion between the open-gate and close-gate conformations leads to a dynamic regulation of the 20S proteasome proteolysis activity. Component of the proteasome core, a large protease complex with broad specificity involved in protein degradation. The polypeptide is Proteasome subunit beta (Methanohalophilus mahii (strain ATCC 35705 / DSM 5219 / SLP)).